A 463-amino-acid chain; its full sequence is L-seryl-tRNA(Sec) selenium transferase (463 aa).

Lys295 bears the N6-(pyridoxal phosphate)lysine mark.

It belongs to the SelA family. Homodecamer; pentamer of dimers. Binds only one seryl-tRNA(Sec) per dimer. Pyridoxal 5'-phosphate serves as cofactor.

It is found in the cytoplasm. It catalyses the reaction L-seryl-tRNA(Sec) + selenophosphate + H(+) = L-selenocysteinyl-tRNA(Sec) + phosphate. The protein operates within aminoacyl-tRNA biosynthesis; selenocysteinyl-tRNA(Sec) biosynthesis; selenocysteinyl-tRNA(Sec) from L-seryl-tRNA(Sec) (bacterial route): step 1/1. Converts seryl-tRNA(Sec) to selenocysteinyl-tRNA(Sec) required for selenoprotein biosynthesis. The polypeptide is L-seryl-tRNA(Sec) selenium transferase (Shigella flexneri).